The primary structure comprises 283 residues: ATP synthase gamma chain (283 aa).

It belongs to the ATPase gamma chain family. In terms of assembly, F-type ATPases have 2 components, CF(1) - the catalytic core - and CF(0) - the membrane proton channel. CF(1) has five subunits: alpha(3), beta(3), gamma(1), delta(1), epsilon(1). CF(0) has three main subunits: a, b and c.

The protein resides in the cell membrane. In terms of biological role, produces ATP from ADP in the presence of a proton gradient across the membrane. The gamma chain is believed to be important in regulating ATPase activity and the flow of protons through the CF(0) complex. This is ATP synthase gamma chain from Clostridium botulinum (strain Eklund 17B / Type B).